The sequence spans 498 residues: MEYLLALDQGTSSSRAIVFNRAGQIVASAQQEFPQHFPQPGWVEHDPLDIWSSQLATCRAALEQARLGAADMAALGITNQRETTVVWERATGRPIFNAIVWQDRRTEAICERLRAEGLEDEVRKRTGLVIDPYFSGTKLRWILDHVDGARERAARGELAFGTIDSWLVWQLTRGRLHVTDVSNASRTLLWNIHTGQWDADLMRALDIHPSLLPEVHPSAHRFGQTDADWLGAPLTIGGIAGDQQSALFGQACFKPGMAKNTYGTGCFMLLNTGERAVESRNGLISTAACQSGSRRSYALEGSVFVGGAVVQWLRDGLRAIQRSADVEGLAASVPDSGGVVFVPSFTGLGAPYWDPTAQGAIVGLSRGTTIGHIARAALESIAFQSTALLQAMTRDAVSAITELRVDGGASANNLLLQFQADLLGIPVVRPEIIETTALGAAYLAGIATGFYRSEDEVARQWRASRTFHPVISRDEAQHRMAQWEMAVAQVRLPTTHGH.

Threonine 11 contributes to the ADP binding site. Residues threonine 11, serine 12, and serine 13 each contribute to the ATP site. Sn-glycerol 3-phosphate is bound at residue threonine 11. Arginine 15 contributes to the ADP binding site. Sn-glycerol 3-phosphate contacts are provided by arginine 81, glutamate 82, tyrosine 133, and aspartate 242. Residues arginine 81, glutamate 82, tyrosine 133, aspartate 242, and glutamine 243 each contribute to the glycerol site. Positions 264 and 307 each coordinate ADP. ATP contacts are provided by threonine 264, glycine 307, glutamine 311, and glycine 408. The ADP site is built by glycine 408 and asparagine 412.

It belongs to the FGGY kinase family.

It catalyses the reaction glycerol + ATP = sn-glycerol 3-phosphate + ADP + H(+). It participates in polyol metabolism; glycerol degradation via glycerol kinase pathway; sn-glycerol 3-phosphate from glycerol: step 1/1. Inhibited by fructose 1,6-bisphosphate (FBP). Key enzyme in the regulation of glycerol uptake and metabolism. Catalyzes the phosphorylation of glycerol to yield sn-glycerol 3-phosphate. This chain is Glycerol kinase, found in Ralstonia nicotianae (strain ATCC BAA-1114 / GMI1000) (Ralstonia solanacearum).